The chain runs to 87 residues: Large ribosomal subunit protein eL20 (87 aa).

It belongs to the eukaryotic ribosomal protein eL20 family. In terms of assembly, part of the 50S ribosomal subunit. Binds 23S rRNA.

The chain is Large ribosomal subunit protein eL20 from Hyperthermus butylicus (strain DSM 5456 / JCM 9403 / PLM1-5).